The sequence spans 217 residues: Proteasome subunit beta type-9 (217 aa).

A propeptide spans 1–18 (MLGEEAEPQWISEEVKTG) (removed in mature form). The active-site Nucleophile is Thr-19.

It belongs to the peptidase T1B family. In terms of assembly, the 26S proteasome consists of a 20S proteasome core and two 19S regulatory subunits. The 20S proteasome core is composed of 28 subunits that are arranged in four stacked rings, resulting in a barrel-shaped structure. The two end rings are each formed by seven alpha subunits, and the two central rings are each formed by seven beta subunits. The catalytic chamber with the active sites is on the inside of the barrel. Component of the immunoproteasome, where it displaces the equivalent housekeeping subunit PSMB6. Autocleaved. The resulting N-terminal Thr residue of the mature subunit is responsible for the nucleophile proteolytic activity.

It is found in the cytoplasm. The protein localises to the nucleus. The enzyme catalyses Cleavage of peptide bonds with very broad specificity.. Its function is as follows. The proteasome is a multicatalytic proteinase complex which is characterized by its ability to cleave peptides with Arg, Phe, Tyr, Leu, and Glu adjacent to the leaving group at neutral or slightly basic pH. The proteasome has an ATP-dependent proteolytic activity. This subunit is involved in antigen processing to generate class I binding peptides. The sequence is that of Proteasome subunit beta type-9 (psmb9) from Oryzias latipes (Japanese rice fish).